A 951-amino-acid chain; its full sequence is Plasma membrane ATPase (951 aa).

Transmembrane regions (helical) follow at residues 61–81, 93–113, 243–263, and 277–297; these read FLGF…IMAI, WEDF…SFIE, IGNF…IVMF, and LLVL…SVTM. Asp-329 serves as the catalytic 4-aspartylphosphate intermediate. The Mg(2+) site is built by Asp-588 and Asp-592. 6 consecutive transmembrane segments (helical) span residues 647 to 667, 671 to 691, 709 to 729, 752 to 772, 785 to 805, and 814 to 834; these read IYAV…ALIW, FSPF…MTIS, IFAT…IFFW, EMMS…IFVT, LLLV…AVYA, and GIGW…YFPL.

This sequence belongs to the cation transport ATPase (P-type) (TC 3.A.3) family. Type IIIA subfamily.

It localises to the cell membrane. It catalyses the reaction ATP + H2O + H(+)(in) = ADP + phosphate + 2 H(+)(out). The plasma membrane ATPase of plants and fungi is a hydrogen ion pump. The proton gradient it generates drives the active transport of nutrients by H(+)-symport. The resulting external acidification and/or internal alkinization may mediate growth responses. This Oryza sativa subsp. japonica (Rice) protein is Plasma membrane ATPase.